The primary structure comprises 925 residues: GPI ethanolamine phosphate transferase 1 (925 aa).

At Met-1–Arg-6 the chain is on the cytoplasmic side. A helical membrane pass occupies residues Leu-7 to Ile-27. Topologically, residues Tyr-28–Ser-457 are lumenal. N-linked (GlcNAc...) asparagine glycans are attached at residues Asn-90, Asn-138, Asn-198, Asn-286, Asn-312, and Asn-358. The helical transmembrane segment at Ile-458–Phe-478 threads the bilayer. Topologically, residues Ile-479–Asn-492 are cytoplasmic. Residues Leu-493–Gln-510 traverse the membrane as a helical segment. Residues Arg-511–Tyr-516 lie on the Lumenal side of the membrane. The helical transmembrane segment at Tyr-517–Leu-537 threads the bilayer. At His-538 to Gly-547 the chain is on the cytoplasmic side. The chain crosses the membrane as a helical span at residues Val-548 to Val-568. At Tyr-569–Arg-574 the chain is on the lumenal side. Residues Trp-575–Asp-595 traverse the membrane as a helical segment. Residues Ala-596–Asn-599 lie on the Cytoplasmic side of the membrane. A helical transmembrane segment spans residues Met-600–Ile-620. Residue Glu-621 is a topological domain, lumenal. A helical membrane pass occupies residues Ser-622 to Trp-642. Over Arg-643 to Lys-653 the chain is Cytoplasmic. A helical membrane pass occupies residues Ile-654 to Val-674. Residues Thr-675–Ala-687 are Lumenal-facing. Residues Lys-688–Leu-708 form a helical membrane-spanning segment. Topologically, residues Lys-709–Leu-719 are cytoplasmic. Residues Val-720–Phe-740 traverse the membrane as a helical segment. Topologically, residues Tyr-741–Arg-775 are lumenal. A helical transmembrane segment spans residues Ile-776–Ser-796. Over Ile-797 to Gly-818 the chain is Cytoplasmic. A helical membrane pass occupies residues Ala-819–Met-839. At Asn-840–Tyr-848 the chain is on the lumenal side. A helical membrane pass occupies residues Thr-849–Leu-869. At Arg-870–Tyr-885 the chain is on the cytoplasmic side. The chain crosses the membrane as a helical span at residues Cys-886–Leu-906. The Lumenal portion of the chain corresponds to Lys-907–His-925.

Belongs to the PIGG/PIGN/PIGO family. PIGN subfamily.

The protein resides in the endoplasmic reticulum membrane. The protein operates within glycolipid biosynthesis; glycosylphosphatidylinositol-anchor biosynthesis. Functionally, ethanolamine phosphate transferase involved in glycosylphosphatidylinositol-anchor biosynthesis. Transfers ethanolamine phosphate to the first alpha-1,4-linked mannose of the glycosylphosphatidylinositol precursor of GPI-anchor. The protein is GPI ethanolamine phosphate transferase 1 (MCD4) of Eremothecium gossypii (strain ATCC 10895 / CBS 109.51 / FGSC 9923 / NRRL Y-1056) (Yeast).